A 187-amino-acid polypeptide reads, in one-letter code: Probable nicotinate-nucleotide adenylyltransferase (187 aa).

It belongs to the NadD family.

It catalyses the reaction nicotinate beta-D-ribonucleotide + ATP + H(+) = deamido-NAD(+) + diphosphate. The protein operates within cofactor biosynthesis; NAD(+) biosynthesis; deamido-NAD(+) from nicotinate D-ribonucleotide: step 1/1. Its function is as follows. Catalyzes the reversible adenylation of nicotinate mononucleotide (NaMN) to nicotinic acid adenine dinucleotide (NaAD). The sequence is that of Probable nicotinate-nucleotide adenylyltransferase from Anaeromyxobacter sp. (strain K).